The chain runs to 440 residues: MEQPQEETPEAREEEKEEVAMGDGAPELNGGPEHTLPSSSCADLSQNSSPSSLLDQLQMGCDGASGGSLNMECRVCGDKASGFHYGVHACEGCKGFFRRTIRMKLEYEKCDRICKIQKKNRNKCQYCRFQKCLALGMSHNAIRFGRMPEAEKRKLVAGLTASEGCQHNPQLADLKAFSKHIYNAYLKNFNMTKKKARSILTGKSSHNAPFVIHDIETLWQAEKGLVWKQLVNGLPPYNEISVHVFYRCQSTTVETVRELTEFAKNIPNFSSLFLNDQVTLLKYGVHEAIFAMLASIVNKDGLLVANGSGFVTHEFLRSLRKPFSDIIEPKFEFAVKFNALELDDSDLALFIAAIILCGDRPGLMNVPQVEAIQDTILRALEFHLQVNHPDSQYLFPKLLQKMADLRQLVTEHAQMMQWLKKTESETLLHPLLQEIYKDMY.

The tract at residues 1–53 (MEQPQEETPEAREEEKEEVAMGDGAPELNGGPEHTLPSSSCADLSQNSSPSSL) is disordered. Over residues 36–53 (LPSSSCADLSQNSSPSSL) the composition is skewed to polar residues. Positions 70-144 (NMECRVCGDK…LGMSHNAIRF (75 aa)) form a DNA-binding region, nuclear receptor. 2 NR C4-type zinc fingers span residues 73-93 (CRVC…CEGC) and 110-132 (CDRI…FQKC). Residues 210–438 (FVIHDIETLW…HPLLQEIYKD (229 aa)) enclose the NR LBD domain.

This sequence belongs to the nuclear hormone receptor family. NR1 subfamily. Heterodimer with the retinoid X receptor. Interacts (via domain NR LBD) with CRY1 and CRY2 in a ligand-dependent manner. Post-translationally, 'Lys-48'-linked polyubiquitinated; leading to proteasomal degradation. Deubiquitinated and stabilized by OTUD3. As to expression, heart, adrenal and intestine.

It is found in the nucleus. Its function is as follows. Ligand-activated transcription factor key mediator of energy metabolism in adipose tissues. Receptor that binds peroxisome proliferators such as hypolipidemic drugs and fatty acids. Has a preference for poly-unsaturated fatty acids, such as gamma-linoleic acid and eicosapentanoic acid. Once activated by a ligand, the receptor binds to promoter elements of target genes. Regulates the peroxisomal beta-oxidation pathway of fatty acids. Functions as transcription activator for the acyl-CoA oxidase gene. Decreases expression of NPC1L1 once activated by a ligand. The protein is Peroxisome proliferator-activated receptor delta (Ppard) of Mus musculus (Mouse).